The primary structure comprises 161 residues: Cytochrome c-type biogenesis protein CcmE (161 aa).

At 1–8 the chain is on the cytoplasmic side; sequence MNPRRQKR. A helical; Signal-anchor for type II membrane protein transmembrane segment spans residues 9–29; it reads LGIILAILIGVSATIGLMIYA. Residues 30 to 161 lie on the Periplasmic side of the membrane; the sequence is LNQNMDLFYT…SEEQKQGSGQ (132 aa). Heme is bound by residues histidine 129 and tyrosine 133.

The protein belongs to the CcmE/CycJ family.

It is found in the cell inner membrane. Functionally, heme chaperone required for the biogenesis of c-type cytochromes. Transiently binds heme delivered by CcmC and transfers the heme to apo-cytochromes in a process facilitated by CcmF and CcmH. This is Cytochrome c-type biogenesis protein CcmE from Vibrio vulnificus (strain CMCP6).